The primary structure comprises 1670 residues: DNA-directed RNA polymerase I subunit 1 (1670 aa).

Zn(2+)-binding residues include Cys-79, Cys-82, Cys-89, His-92, Cys-119, and Cys-122. Residues 154-185 (ESNTPTKSKSSDESCESVVTTDSSEECEDSDV) form a disordered region. Over residues 176–185 (SSEECEDSDV) the composition is skewed to acidic residues. 2 residues coordinate Zn(2+): Cys-213 and Cys-216. A disordered region spans residues 255–293 (TSSVENPDGFDDSGIDALSEVEDGDKETREKSTEVAAEF). Over residues 262–279 (DGFDDSGIDALSEVEDGD) the composition is skewed to acidic residues. The segment covering 280-293 (KETREKSTEVAAEF) has biased composition (basic and acidic residues). 3 residues coordinate Mg(2+): Asp-602, Asp-604, and Asp-606. A bridging helix region spans residues 1005-1017 (PQEYYFHCMAGRE). A disordered region spans residues 1318–1437 (TGPIAGNETD…EQSKKKRRKF (120 aa)). 3 stretches are compositionally biased toward acidic residues: residues 1339–1354 (DDGD…DDLG), 1366–1379 (DEMD…DETN), and 1388–1399 (EDPEMDSENEDT). Residues 1415-1429 (EPQKEVKGVKNVKEQ) show a composition bias toward basic and acidic residues.

This sequence belongs to the RNA polymerase beta' chain family. Component of the RNA polymerase I (Pol I) complex consisting of at least 13 subunits.

The protein resides in the nucleus. It carries out the reaction RNA(n) + a ribonucleoside 5'-triphosphate = RNA(n+1) + diphosphate. In terms of biological role, DNA-dependent RNA polymerase catalyzes the transcription of DNA into RNA using the four ribonucleoside triphosphates as substrates. Largest and catalytic core component of RNA polymerase I which synthesizes ribosomal RNA precursors. Forms the polymerase active center together with the second largest subunit. A single stranded DNA template strand of the promoter is positioned within the central active site cleft of Pol I. A bridging helix emanates from NRPA1 and crosses the cleft near the catalytic site and is thought to promote translocation of Pol I by acting as a ratchet that moves the RNA-DNA hybrid through the active site by switching from straight to bent conformations at each step of nucleotide addition. In Arabidopsis thaliana (Mouse-ear cress), this protein is DNA-directed RNA polymerase I subunit 1.